Reading from the N-terminus, the 1181-residue chain is WD repeat-containing protein 35 (1181 aa).

WD repeat units lie at residues 12–51, 69–108, 113–152, 154–193, and 502–539; these read PNNVKLKCISWNKDQGFIACGGEDGLLKVLRLETQTDDSK, GHSGAVQVVTWNEQYQKLTTSDQNGLIIVWMLYKGSWYEE, RNKSVVRSMSWNADGQKICIVYEDGAVIVGSVDGNRIWGK, LKGIQLCHVTWSADSKILLFGMANGEIHIYDNQGNFIMKM, and GTRDPICAITASDKTLIVGRESGVIQRYSFPNVALIQK.

As to quaternary structure, component of the IFT complex A (IFT-A) complex. IFT-A complex is divided into a core subcomplex composed of IFT122:IFT140:WDR19 which is associated with TULP3 and a peripheral subcomplex composed of IFT43:WDR35:TTC21B. Interacts directy with IFT122, ITF43 and TTC21B. Interacts with IFT43. Interacts with CFAP61.

It localises to the cytoplasm. The protein localises to the cytoskeleton. It is found in the microtubule organizing center. The protein resides in the centrosome. Its subcellular location is the cilium axoneme. It localises to the cilium basal body. As a component of the IFT complex A (IFT-A), a complex required for retrograde ciliary transport and entry into cilia of G protein-coupled receptors (GPCRs), it is involved in ciliogenesis and ciliary protein trafficking. May promote CASP3 activation and TNF-stimulated apoptosis. This chain is WD repeat-containing protein 35, found in Mus musculus (Mouse).